A 166-amino-acid chain; its full sequence is Small ribosomal subunit protein uS5 (166 aa).

In terms of domain architecture, S5 DRBM spans 11–74 (LIDKVVHISR…ESAKRTMFEV (64 aa)).

The protein belongs to the universal ribosomal protein uS5 family. In terms of assembly, part of the 30S ribosomal subunit. Contacts proteins S4 and S8.

Functionally, with S4 and S12 plays an important role in translational accuracy. In terms of biological role, located at the back of the 30S subunit body where it stabilizes the conformation of the head with respect to the body. The chain is Small ribosomal subunit protein uS5 from Syntrophobacter fumaroxidans (strain DSM 10017 / MPOB).